The primary structure comprises 542 residues: Aspartate kinase FUB3 (542 aa).

ACT domains follow at residues 404-472 (ILSN…VLPD) and 478-542 (LVGA…KSAI).

This sequence belongs to the aspartokinase family.

The catalysed reaction is L-aspartate + ATP = 4-phospho-L-aspartate + ADP. It participates in mycotoxin biosynthesis. In terms of biological role, aspartate kinase; part of the gene cluster that mediates the biosynthesis of fusaric acid, a mycotoxin with low to moderate toxicity to animals and humans, but with high phytotoxic properties. L-aspartate is suggested as fusaric acid amino acid precursor that is activated and further processed to O-acetyl-L-homoserine by cluster enzymes aspartate kinase FUB3 and homoserine O-acetyltransferase FUB5, as well as enzymes of the primary metabolism. The polyketide synthase (PKS) FUB1 generates the triketide trans-2-hexenal which is presumptively released by the hydrolase FUB4 and linked to the NRPS-bound amino acid precursor by NAD(P)-dependent dehydrogenase FUB6. FUB1, FUB4, and the non-canonical NRPS Fub8 may form an enzyme complex. Further processing of the NRPS-bound intermediate might be carried out by FUB6 and the sulfhydrylase FUB7, enabling a spontaneous electrocyclization to close the carbon backbone of fusaric acid. Dihydrofusaric acid is likely to be released via reduction by the thioester reductase (TR) domain of FUB8 whereupon the final oxidation to fusaric acid may (also) be performed by the FMN-dependent dehydrogenase FUB9. This Fusarium oxysporum f. sp. lycopersici (strain 4287 / CBS 123668 / FGSC 9935 / NRRL 34936) (Fusarium vascular wilt of tomato) protein is Aspartate kinase FUB3.